A 60-amino-acid polypeptide reads, in one-letter code: Single-pass membrane and coiled-coil domain-containing protein 4 homolog (60 aa).

Residues methionine 1 to glutamate 22 form a disordered region. A compositionally biased stretch (basic and acidic residues) spans glutamine 8–glutamate 22. Residues glutamine 8–valine 34 are a coiled coil. The helical transmembrane segment at leucine 30–phenylalanine 50 threads the bilayer.

It belongs to the SMCO4 family.

It localises to the membrane. In Culex quinquefasciatus (Southern house mosquito), this protein is Single-pass membrane and coiled-coil domain-containing protein 4 homolog.